The chain runs to 401 residues: Serine--glyoxylate aminotransferase (401 aa).

Residue Met1 is modified to N-acetylmethionine. Pyridoxal 5'-phosphate-binding positions include 68 to 70 (TGT), Thr148, and 200 to 201 (QK). Lys201 contacts 3-hydroxypyruvate. Lys201 bears the N6-(pyridoxal phosphate)lysine mark. Phosphoserine is present on Ser204. Residue Arg347 participates in 3-hydroxypyruvate binding. The short motif at 399–401 (SRI) is the Microbody targeting signal element.

It belongs to the class-V pyridoxal-phosphate-dependent aminotransferase family. Forms homodimers. Interacts with RABGAP22. It depends on pyridoxal 5'-phosphate as a cofactor. Widely expressed. Preferentially expressed in green, leafy tissues, root cortex and epidermis, developing siliques and dry seeds.

It localises to the peroxisome. The catalysed reaction is glyoxylate + L-serine = 3-hydroxypyruvate + glycine. The enzyme catalyses glyoxylate + L-alanine = glycine + pyruvate. It carries out the reaction L-serine + pyruvate = 3-hydroxypyruvate + L-alanine. It catalyses the reaction 3-hydroxypyruvate + L-asparagine = 2-oxosuccinamate + L-serine. The catalysed reaction is L-asparagine + glyoxylate = 2-oxosuccinamate + glycine. The enzyme catalyses L-asparagine + pyruvate = 2-oxosuccinamate + L-alanine. With respect to regulation, inhibited by aminooxyacetate and beta-chloro-L-alanine, but not by p-hydroxymercuribenzoate. Its function is as follows. Photorespiratory enzyme that catalyzes transamination reactions with multiple substrates, including asparagine. Functions exclusively as a catabolic enzyme in Asn metabolism. Involved in root development during seedling establishment after seed germination by regulating serine homeostasis and acetate conversion. In Arabidopsis thaliana (Mouse-ear cress), this protein is Serine--glyoxylate aminotransferase.